We begin with the raw amino-acid sequence, 474 residues long: Ribulose bisphosphate carboxylase large chain (474 aa).

Residues asparagine 122 and threonine 172 each coordinate substrate. The active-site Proton acceptor is the lysine 174. Position 176 (lysine 176) interacts with substrate. Residues lysine 200, aspartate 202, and glutamate 203 each coordinate Mg(2+). Lysine 200 carries the N6-carboxylysine modification. Histidine 293 (proton acceptor) is an active-site residue. Substrate-binding residues include arginine 294, histidine 326, and serine 378.

It belongs to the RuBisCO large chain family. Type I subfamily. In terms of assembly, heterohexadecamer of 8 large chains and 8 small chains; disulfide-linked. The disulfide link is formed within the large subunit homodimers. The cofactor is Mg(2+). In terms of processing, the disulfide bond which can form in the large chain dimeric partners within the hexadecamer appears to be associated with oxidative stress and protein turnover.

It localises to the carboxysome. The enzyme catalyses 2 (2R)-3-phosphoglycerate + 2 H(+) = D-ribulose 1,5-bisphosphate + CO2 + H2O. It carries out the reaction D-ribulose 1,5-bisphosphate + O2 = 2-phosphoglycolate + (2R)-3-phosphoglycerate + 2 H(+). Functionally, ruBisCO catalyzes two reactions: the carboxylation of D-ribulose 1,5-bisphosphate, the primary event in carbon dioxide fixation, as well as the oxidative fragmentation of the pentose substrate in the photorespiration process. Both reactions occur simultaneously and in competition at the same active site. The sequence is that of Ribulose bisphosphate carboxylase large chain from Synechococcus sp. (strain JA-2-3B'a(2-13)) (Cyanobacteria bacterium Yellowstone B-Prime).